A 228-amino-acid polypeptide reads, in one-letter code: DNA mismatch repair protein MutH (228 aa).

Belongs to the MutH family.

The protein resides in the cytoplasm. Functionally, sequence-specific endonuclease that cleaves unmethylated GATC sequences. It is involved in DNA mismatch repair. The protein is DNA mismatch repair protein MutH of Yersinia pseudotuberculosis serotype IB (strain PB1/+).